The sequence spans 687 residues: Probable intron-encoded endonuclease aI3 (687 aa).

The interval 1–374 (MKQMSYVTRW…NASMDVAFHD (374 aa)) is COX1 exons 1 to 3 encoded. A run of 10 helical transmembrane segments spans residues 19–39 (IGMTYLGFGMLSAMMGTGMSV), 69–89 (LLMMFFFIMPVWMGAFGNFFL), 103–123 (LNNISFWCLPPALVCMVCSVL), 152–172 (AMFAMHLTSMSSLLGAMNFMV), 188–208 (PLFAWAMFLTAMLLLLSLPVL), 240–260 (LFWFFGHPEVYILMMPGFGVM), 273–293 (FGEMGMLYAMGSIGFLGFLVW), 315–335 (MVIAVPTGIKIFSWLATIYGG), 341–361 (VPMLFALGFLFLFTMGGLTGV), and 376–396 (IFIYYVSFFLYTLYNMYNNYT). Residues 375–687 (RIFIYYVSFF…KKESLMKFLK (313 aa)) are COX1 intron 3 encoded.

In the C-terminal section; belongs to the LAGLIDADG endonuclease family. The protein in the N-terminal section; belongs to the heme-copper respiratory oxidase family. The mature protein may arise from proteolytic cleavage of an in-frame translation of COX1 exons 1 to 3 plus intron 3, containing the aI3 open reading frame.

The protein localises to the mitochondrion. Its subcellular location is the membrane. Mitochondrial DNA endonuclease involved in intron homing. In Debaryomyces hansenii (strain ATCC 36239 / CBS 767 / BCRC 21394 / JCM 1990 / NBRC 0083 / IGC 2968) (Yeast), this protein is Probable intron-encoded endonuclease aI3 (aI3).